A 211-amino-acid polypeptide reads, in one-letter code: Bcl-2 homologous antagonist/killer (211 aa).

Residues 1-28 are disordered; the sequence is MASGQGPGPPRQECGEPALPSASEEQVA. A2 bears the N-acetylalanine mark. The BH3 signature appears at 74-88; the sequence is VGRQLAIIGDDINRR. Positions 117-136 match the BH1 motif; sequence SLFESGINWGRVVALLGFGY. Zn(2+) is bound by residues D160 and H164. The BH2 signature appears at 169–184; sequence RWIAQRGGWVAALNLG. The helical transmembrane segment at 188–205 threads the bilayer; sequence ILNVLVVLGVVLLGQFVV.

Belongs to the Bcl-2 family. As to quaternary structure, homodimer. Formation of the homodimer is zinc-dependent. Forms heterodimers with BCL2 and BCL2L1 isoform Bcl-X(L). Forms heterooligomers with BAX. Interacts with BCL2A1. Interacts with RTL10/BOP. Interacts with VDAC1. Interacts with GIMAP3/IAN4 and GIMAP5/IAN5. In terms of assembly, (Microbial infection) Interacts with vaccinia virus protein F1. (Microbial infection) Interacts with myxoma virus protein M11L. As to quaternary structure, (Microbial infection) Interacts with Epstein-Barr virus protein BALF1. In terms of assembly, (Microbial infection) Interacts with adenovirus protein E1B 19K. Expressed in a wide variety of tissues, with highest levels in the heart and skeletal muscle.

The protein localises to the mitochondrion outer membrane. Plays a role in the mitochondrial apoptotic process. Upon arrival of cell death signals, promotes mitochondrial outer membrane (MOM) permeabilization by oligomerizing to form pores within the MOM. This releases apoptogenic factors into the cytosol, including cytochrome c, promoting the activation of caspase 9 which in turn processes and activates the effector caspases. This Homo sapiens (Human) protein is Bcl-2 homologous antagonist/killer (BAK1).